Here is a 664-residue protein sequence, read N- to C-terminus: Macoilin (664 aa).

4 consecutive transmembrane segments (helical) span residues threonine 28–leucine 48, alanine 75–isoleucine 95, valine 120–phenylalanine 140, and phenylalanine 154–valine 174. The segment covering arginine 253–lysine 265 has biased composition (basic and acidic residues). The segment at arginine 253 to asparagine 274 is disordered. Serine 305 carries the phosphoserine modification. The span at lysine 320–serine 348 shows a compositional bias: polar residues. Positions lysine 320–asparagine 375 are disordered. Asparagine 324 carries an N-linked (GlcNAc...) asparagine glycan. Position 332 is a phosphoserine (serine 332). N-linked (GlcNAc...) asparagine glycans are attached at residues asparagine 340 and asparagine 452. A disordered region spans residues threonine 630–lysine 664. Phosphoserine is present on residues serine 631 and serine 634. Asparagine 655 carries an N-linked (GlcNAc...) asparagine glycan.

Belongs to the macoilin family. Strong expression in whole nervous system up to 12.5 dpc. Highly expressed in all neuronal differentiation fields from 14.5 dpc to birth, with highest expression in the telencephalic cortical plate and mitral cells in the olfactory bulb, and lower expression in neuronal progenitor zones. Progressively decreased expression in fields of neuron precursor proliferation from 14.5 dpc and virtually undetectable there by 17.5 dpc. No significant expression detected outside the nervous system. After birth, significant expression remains in the cerebellum, olfactory bulb and hippocampus.

It is found in the rough endoplasmic reticulum membrane. Its subcellular location is the nucleus membrane. In terms of biological role, plays a role in the regulation of neuronal activity. This Mus musculus (Mouse) protein is Macoilin (Maco1).